The sequence spans 142 residues: Deoxyuridine 5'-triphosphate nucleotidohydrolase (142 aa).

Substrate-binding positions include 62–64 (RSG), Asn-75, and 79–81 (TID).

The protein belongs to the dUTPase family. It depends on Mg(2+) as a cofactor.

It catalyses the reaction dUTP + H2O = dUMP + diphosphate + H(+). Its pathway is pyrimidine metabolism; dUMP biosynthesis; dUMP from dCTP (dUTP route): step 2/2. Functionally, this enzyme is involved in nucleotide metabolism: it produces dUMP, the immediate precursor of thymidine nucleotides and it decreases the intracellular concentration of dUTP so that uracil cannot be incorporated into DNA. This is Deoxyuridine 5'-triphosphate nucleotidohydrolase from Clostridium novyi (strain NT).